The sequence spans 530 residues: Chitin synthase 1 (530 aa).

N-linked (GlcNAc...) asparagine glycosylation occurs at Asn-17. Residues Gln-22–Arg-94 are disordered. Over residues Ser-24–Glu-56 the composition is skewed to polar residues. Asn-118, Asn-310, and Asn-474 each carry an N-linked (GlcNAc...) asparagine glycan. The next 2 membrane-spanning stretches (helical) occupy residues Phe-477 to Phe-497 and Ile-508 to Leu-528.

This sequence belongs to the chitin synthase family. Class II subfamily.

The protein localises to the cell membrane. The catalysed reaction is [(1-&gt;4)-N-acetyl-beta-D-glucosaminyl](n) + UDP-N-acetyl-alpha-D-glucosamine = [(1-&gt;4)-N-acetyl-beta-D-glucosaminyl](n+1) + UDP + H(+). Its function is as follows. Polymerizes chitin, a structural polymer of the cell wall and septum, by transferring the sugar moiety of UDP-GlcNAc to the non-reducing end of the growing chitin polymer. This Rhizopus delemar (strain RA 99-880 / ATCC MYA-4621 / FGSC 9543 / NRRL 43880) (Mucormycosis agent) protein is Chitin synthase 1.